Reading from the N-terminus, the 465-residue chain is GTPase Der (465 aa).

2 consecutive EngA-type G domains span residues 3-167 and 179-352; these read PLVA…PEEG and VRIA…ASAT. GTP contacts are provided by residues 9 to 16, 57 to 61, 119 to 122, 185 to 192, 232 to 236, and 297 to 300; these read GRPNVGKS, DTGGI, NKID, DTAGL, and NKWD. The KH-like domain maps to 353 to 437; that stretch reads HEFSTSEVNQ…PVCFIFREGA (85 aa).

The protein belongs to the TRAFAC class TrmE-Era-EngA-EngB-Septin-like GTPase superfamily. EngA (Der) GTPase family. In terms of assembly, associates with the 50S ribosomal subunit.

Its function is as follows. GTPase that plays an essential role in the late steps of ribosome biogenesis. This Xanthomonas oryzae pv. oryzae (strain MAFF 311018) protein is GTPase Der.